The sequence spans 218 residues: Small ribosomal subunit protein uS3c (218 aa).

The region spanning 47-118 (VQKHMRISSG…RLNIAIARVA (72 aa)) is the KH type-2 domain.

The protein belongs to the universal ribosomal protein uS3 family. In terms of assembly, part of the 30S ribosomal subunit.

The protein localises to the plastid. It localises to the chloroplast. In Nymphaea alba (White water-lily), this protein is Small ribosomal subunit protein uS3c (rps3).